Here is a 239-residue protein sequence, read N- to C-terminus: MADS-box transcription factor 34 (239 aa).

The MADS-box domain occupies 1 to 61; sequence MGRGKVVLQR…GRLYQFSSSS (61 aa). In terms of domain architecture, K-box spans 88-178; that stretch reads MQNNYQEYVN…KRKLDEIDVE (91 aa). The tract at residues 179-208 is disordered; the sequence is AAPPQPPWNGNCSNGHGGGGGVFSSEPPQP.

Highly expressed in leaves and at low levels in roots and spikelets (rice flower).

The protein localises to the nucleus. Probable transcription factor. The protein is MADS-box transcription factor 34 (MADS34) of Oryza sativa subsp. japonica (Rice).